Here is a 62-residue protein sequence, read N- to C-terminus: Conotoxin Qc5.1 (62 aa).

The first 22 residues, 1–22 (MRCVPVFIILLLLSPSAPSVDA), serve as a signal peptide directing secretion. The propeptide occupies 23-48 (HPMTKDDVPQASFHDDAKRTLQVPWM). At Val60 the chain carries Valine amide.

Belongs to the conotoxin T superfamily. Contains 2 disulfide bonds that can be either 'C1-C3, C2-C4' or 'C1-C4, C2-C3', since these disulfide connectivities have been observed for conotoxins with cysteine framework V (for examples, see AC P0DQQ7 and AC P81755). In terms of tissue distribution, expressed by the venom duct.

Its subcellular location is the secreted. The polypeptide is Conotoxin Qc5.1 (Conus quercinus (Oak cone)).